The chain runs to 310 residues: Urease accessory protein UreD (310 aa).

This sequence belongs to the UreD family. UreD, UreF and UreG form a complex that acts as a GTP-hydrolysis-dependent molecular chaperone, activating the urease apoprotein by helping to assemble the nickel containing metallocenter of UreC. The UreE protein probably delivers the nickel.

It is found in the cytoplasm. In terms of biological role, required for maturation of urease via the functional incorporation of the urease nickel metallocenter. The chain is Urease accessory protein UreD from Synechococcus sp. (strain RCC307).